Here is an 84-residue protein sequence, read N- to C-terminus: Small ribosomal subunit protein bS20 (84 aa).

The interval 1–25 is disordered; it reads MPVIKSAMKRVRTSEKAAARNRSQM.

The protein belongs to the bacterial ribosomal protein bS20 family.

Binds directly to 16S ribosomal RNA. This is Small ribosomal subunit protein bS20 from Pediococcus pentosaceus (strain ATCC 25745 / CCUG 21536 / LMG 10740 / 183-1w).